Reading from the N-terminus, the 213-residue chain is Orotate phosphoribosyltransferase (213 aa).

Position 26 (Lys26) interacts with 5-phospho-alpha-D-ribose 1-diphosphate. Residue 34–35 coordinates orotate; it reads FF. Residues 72-73, Arg99, Lys100, Lys103, His105, and 124-132 each bind 5-phospho-alpha-D-ribose 1-diphosphate; these read YK and DDVITAGTA. 2 residues coordinate orotate: Thr128 and Arg156.

This sequence belongs to the purine/pyrimidine phosphoribosyltransferase family. PyrE subfamily. Homodimer. It depends on Mg(2+) as a cofactor.

It carries out the reaction orotidine 5'-phosphate + diphosphate = orotate + 5-phospho-alpha-D-ribose 1-diphosphate. The protein operates within pyrimidine metabolism; UMP biosynthesis via de novo pathway; UMP from orotate: step 1/2. Functionally, catalyzes the transfer of a ribosyl phosphate group from 5-phosphoribose 1-diphosphate to orotate, leading to the formation of orotidine monophosphate (OMP). The protein is Orotate phosphoribosyltransferase of Shigella flexneri.